We begin with the raw amino-acid sequence, 193 residues long: Probable gluconokinase (193 aa).

18-25 (GTAGTGKS) is a binding site for ATP.

Belongs to the gluconokinase GntK/GntV family.

It localises to the cytoplasm. The catalysed reaction is D-gluconate + ATP = 6-phospho-D-gluconate + ADP + H(+). The protein operates within carbohydrate acid metabolism; D-gluconate degradation. This chain is Probable gluconokinase, found in Saccharomyces cerevisiae (strain ATCC 204508 / S288c) (Baker's yeast).